The chain runs to 152 residues: Nucleoside diphosphate kinase (152 aa).

The ATP site is built by lysine 11, phenylalanine 59, arginine 87, threonine 93, arginine 104, and asparagine 114. Histidine 117 serves as the catalytic Pros-phosphohistidine intermediate.

This sequence belongs to the NDK family. As to quaternary structure, homotetramer. Mg(2+) serves as cofactor.

Its subcellular location is the cytoplasm. It catalyses the reaction a 2'-deoxyribonucleoside 5'-diphosphate + ATP = a 2'-deoxyribonucleoside 5'-triphosphate + ADP. The catalysed reaction is a ribonucleoside 5'-diphosphate + ATP = a ribonucleoside 5'-triphosphate + ADP. Its function is as follows. Major role in the synthesis of nucleoside triphosphates other than ATP. The ATP gamma phosphate is transferred to the NDP beta phosphate via a ping-pong mechanism, using a phosphorylated active-site intermediate. The sequence is that of Nucleoside diphosphate kinase from Prochlorococcus marinus (strain MIT 9303).